The sequence spans 319 residues: Beta-ketoacyl-[acyl-carrier-protein] synthase III (319 aa).

Catalysis depends on residues cysteine 112 and histidine 246. An ACP-binding region spans residues 247-251 (QANFR). The active site involves asparagine 276.

The protein belongs to the thiolase-like superfamily. FabH family. Homodimer.

The protein localises to the cytoplasm. The catalysed reaction is malonyl-[ACP] + acetyl-CoA + H(+) = 3-oxobutanoyl-[ACP] + CO2 + CoA. It participates in lipid metabolism; fatty acid biosynthesis. In terms of biological role, catalyzes the condensation reaction of fatty acid synthesis by the addition to an acyl acceptor of two carbons from malonyl-ACP. Catalyzes the first condensation reaction which initiates fatty acid synthesis and may therefore play a role in governing the total rate of fatty acid production. Possesses both acetoacetyl-ACP synthase and acetyl transacylase activities. Its substrate specificity determines the biosynthesis of branched-chain and/or straight-chain of fatty acids. The protein is Beta-ketoacyl-[acyl-carrier-protein] synthase III of Shewanella oneidensis (strain ATCC 700550 / JCM 31522 / CIP 106686 / LMG 19005 / NCIMB 14063 / MR-1).